The primary structure comprises 426 residues: 3-phosphoshikimate 1-carboxyvinyltransferase (426 aa).

3-phosphoshikimate-binding residues include Lys22, Ser23, and Arg27. Residue Lys22 participates in phosphoenolpyruvate binding. The phosphoenolpyruvate site is built by Gly96 and Arg124. 3-phosphoshikimate is bound by residues Ser170, Ser171, Gln172, Ser198, Asp314, Asn337, and Lys341. Gln172 is a binding site for phosphoenolpyruvate. Asp314 serves as the catalytic Proton acceptor. Phosphoenolpyruvate contacts are provided by Arg345, Arg387, and Lys412.

It belongs to the EPSP synthase family. As to quaternary structure, monomer.

It is found in the cytoplasm. It catalyses the reaction 3-phosphoshikimate + phosphoenolpyruvate = 5-O-(1-carboxyvinyl)-3-phosphoshikimate + phosphate. The protein operates within metabolic intermediate biosynthesis; chorismate biosynthesis; chorismate from D-erythrose 4-phosphate and phosphoenolpyruvate: step 6/7. In terms of biological role, catalyzes the transfer of the enolpyruvyl moiety of phosphoenolpyruvate (PEP) to the 5-hydroxyl of shikimate-3-phosphate (S3P) to produce enolpyruvyl shikimate-3-phosphate and inorganic phosphate. The sequence is that of 3-phosphoshikimate 1-carboxyvinyltransferase from Shewanella baltica (strain OS155 / ATCC BAA-1091).